We begin with the raw amino-acid sequence, 155 residues long: MMTQDYKLQVEAIKCGTVIDHIPAQIGFKLLSLFKLTATDQRITIGLNLPSKRSGRKDLIKIENTFLTEQQANQLAMYAPDATVNRIDNYEVVKKLTLSLPERIDAVLTCPNSNCISHNEPVDSSFTVKAQRGEISLKCKYCEKEFDHLAVLHAD.

4 residues coordinate Zn(2+): C110, C115, C139, and C142.

The protein belongs to the PyrI family. In terms of assembly, contains catalytic and regulatory chains. The cofactor is Zn(2+).

Its function is as follows. Involved in allosteric regulation of aspartate carbamoyltransferase. In Yersinia pseudotuberculosis serotype IB (strain PB1/+), this protein is Aspartate carbamoyltransferase regulatory chain.